Reading from the N-terminus, the 291-residue chain is Protease HtpX homolog (291 aa).

Transmembrane regions (helical) follow at residues 4 to 24 (IALFLITNLAVMAVLGITASL) and 38 to 58 (LGALLGFAMVMGFGGAFISLL). H144 is a binding site for Zn(2+). The active site involves E145. H148 is a Zn(2+) binding site. Helical transmembrane passes span 159 to 179 (LIQGVMNTFVVFLSRAIGYFI) and 197 to 217 (VTTVVLDLLLGLVAAMIVAWF). E222 is a binding site for Zn(2+).

It belongs to the peptidase M48B family. Zn(2+) serves as cofactor.

The protein localises to the cell inner membrane. The sequence is that of Protease HtpX homolog from Leptothrix cholodnii (strain ATCC 51168 / LMG 8142 / SP-6) (Leptothrix discophora (strain SP-6)).